The primary structure comprises 441 residues: Peroxisome proliferator-activated receptor delta (441 aa).

Residues 1–22 (MEQPQEEAPEVREEEEKEEVAE) show a composition bias toward acidic residues. Positions 1–54 (MEQPQEEAPEVREEEEKEEVAEAEGAPELNGGPQHALPSSSYTDLSRSSSPPSL) are disordered. The segment covering 37 to 54 (LPSSSYTDLSRSSSPPSL) has biased composition (low complexity). A DNA-binding region (nuclear receptor) is located at residues 71–145 (NMECRVCGDK…LGMSHNAIRF (75 aa)). 2 consecutive NR C4-type zinc fingers follow at residues 74–94 (CRVCGDKASGFHYGVHACEGC) and 111–133 (CERSCKIQKKNRNKCQYCRFQKC). Residues 211 to 439 (FVIHDIETLW…HPLLQEIYKD (229 aa)) form the NR LBD domain.

The protein belongs to the nuclear hormone receptor family. NR1 subfamily. In terms of assembly, heterodimer with the retinoid X receptor. Interacts (via domain NR LBD) with CRY1 and CRY2 in a ligand-dependent manner. 'Lys-48'-linked polyubiquitinated; leading to proteasomal degradation. Deubiquitinated and stabilized by OTUD3. In terms of tissue distribution, ubiquitous with maximal levels in placenta and skeletal muscle.

It localises to the nucleus. In terms of biological role, ligand-activated transcription factor key mediator of energy metabolism in adipose tissues. Receptor that binds peroxisome proliferators such as hypolipidemic drugs and fatty acids. Has a preference for poly-unsaturated fatty acids, such as gamma-linoleic acid and eicosapentanoic acid. Once activated by a ligand, the receptor binds to promoter elements of target genes. Regulates the peroxisomal beta-oxidation pathway of fatty acids. Functions as transcription activator for the acyl-CoA oxidase gene. Decreases expression of NPC1L1 once activated by a ligand. The chain is Peroxisome proliferator-activated receptor delta from Homo sapiens (Human).